The following is a 704-amino-acid chain: Ribosomal RNA large subunit methyltransferase K/L (704 aa).

The protein belongs to the methyltransferase superfamily. RlmKL family.

The protein localises to the cytoplasm. It catalyses the reaction guanosine(2445) in 23S rRNA + S-adenosyl-L-methionine = N(2)-methylguanosine(2445) in 23S rRNA + S-adenosyl-L-homocysteine + H(+). It carries out the reaction guanosine(2069) in 23S rRNA + S-adenosyl-L-methionine = N(2)-methylguanosine(2069) in 23S rRNA + S-adenosyl-L-homocysteine + H(+). Functionally, specifically methylates the guanine in position 2445 (m2G2445) and the guanine in position 2069 (m7G2069) of 23S rRNA. This is Ribosomal RNA large subunit methyltransferase K/L from Alcanivorax borkumensis (strain ATCC 700651 / DSM 11573 / NCIMB 13689 / SK2).